The primary structure comprises 288 residues: Signal recognition particle receptor FtsY (288 aa).

GTP contacts are provided by residues 93-100 (GINGTGKT), 175-179 (DTAGR), and 233-236 (TKLD).

Belongs to the GTP-binding SRP family. FtsY subfamily. As to quaternary structure, part of the signal recognition particle protein translocation system, which is composed of SRP and FtsY.

It is found in the cell membrane. The protein localises to the cytoplasm. It catalyses the reaction GTP + H2O = GDP + phosphate + H(+). Functionally, involved in targeting and insertion of nascent membrane proteins into the cytoplasmic membrane. Acts as a receptor for the complex formed by the signal recognition particle (SRP) and the ribosome-nascent chain (RNC). This Thermoplasma acidophilum (strain ATCC 25905 / DSM 1728 / JCM 9062 / NBRC 15155 / AMRC-C165) protein is Signal recognition particle receptor FtsY.